The chain runs to 473 residues: ATP synthase subunit beta (473 aa).

158–165 (GGAGVGKT) is a binding site for ATP.

The protein belongs to the ATPase alpha/beta chains family. In terms of assembly, F-type ATPases have 2 components, CF(1) - the catalytic core - and CF(0) - the membrane proton channel. CF(1) has five subunits: alpha(3), beta(3), gamma(1), delta(1), epsilon(1). CF(0) has three main subunits: a(1), b(2) and c(9-12). The alpha and beta chains form an alternating ring which encloses part of the gamma chain. CF(1) is attached to CF(0) by a central stalk formed by the gamma and epsilon chains, while a peripheral stalk is formed by the delta and b chains. The F(1)F(0) complex interacts with SpoIIIJ and YqjG; YqgA is found in the same complex.

It localises to the cell membrane. It is found in the membrane raft. It carries out the reaction ATP + H2O + 4 H(+)(in) = ADP + phosphate + 5 H(+)(out). Functionally, produces ATP from ADP in the presence of a proton gradient across the membrane. The catalytic sites are hosted primarily by the beta subunits. The protein is ATP synthase subunit beta of Bacillus subtilis (strain 168).